A 101-amino-acid chain; its full sequence is YcgL domain-containing protein ACIAD2309 (101 aa).

Positions 1 to 93 (MHCDIYRSSK…PPEGFINPSD (93 aa)) constitute a YcgL domain.

The protein is YcgL domain-containing protein ACIAD2309 of Acinetobacter baylyi (strain ATCC 33305 / BD413 / ADP1).